We begin with the raw amino-acid sequence, 337 residues long: Viral cathepsin (337 aa).

An N-terminal signal peptide occupies residues 1-18 (MYLIYYYTIIAVATASIA). A propeptide spans 19–126 (NEKIFYDIDS…VTVAGPSART (108 aa)) (activation peptide). Cystine bridges form between C147–C188, C181–C221, and C276–C324. C150 is a catalytic residue. Residues H283 and N303 contribute to the active site.

The protein belongs to the peptidase C1 family. In terms of processing, synthesized as an inactive proenzyme and activated by proteolytic removal of the inhibitory propeptide.

The catalysed reaction is Endopeptidase of broad specificity, hydrolyzing substrates of both cathepsin L and cathepsin B.. Cysteine protease that plays an essential role in host liquefaction to facilitate horizontal transmission of the virus. May participate in the degradation of foreign protein expressed by the baculovirus system. This is Viral cathepsin (VCATH) from Spodoptera litura multicapsid nucleopolyhedrovirus (SpltMNPV).